A 445-amino-acid chain; its full sequence is Vacuolar fusion protein CCZ1 homolog (445 aa).

It belongs to the CCZ1 family.

The polypeptide is Vacuolar fusion protein CCZ1 homolog (Dictyostelium discoideum (Social amoeba)).